Here is a 164-residue protein sequence, read N- to C-terminus: Peptide methionine sulfoxide reductase MsrA (164 aa).

Cys16 is a catalytic residue.

Belongs to the MsrA Met sulfoxide reductase family.

It carries out the reaction L-methionyl-[protein] + [thioredoxin]-disulfide + H2O = L-methionyl-(S)-S-oxide-[protein] + [thioredoxin]-dithiol. The enzyme catalyses [thioredoxin]-disulfide + L-methionine + H2O = L-methionine (S)-S-oxide + [thioredoxin]-dithiol. Functionally, has an important function as a repair enzyme for proteins that have been inactivated by oxidation. Catalyzes the reversible oxidation-reduction of methionine sulfoxide in proteins to methionine. The sequence is that of Peptide methionine sulfoxide reductase MsrA from Methanoculleus marisnigri (strain ATCC 35101 / DSM 1498 / JR1).